The sequence spans 156 residues: Cell division protein SepF (156 aa).

The segment covering 20-36 (AQYGYEKEQTDMKKQQD) has biased composition (basic and acidic residues). Positions 20-50 (AQYGYEKEQTDMKKQQDPPEQQDVTFPKAQP) are disordered.

Belongs to the SepF family. In terms of assembly, homodimer. Interacts with FtsZ.

Its subcellular location is the cytoplasm. Its function is as follows. Cell division protein that is part of the divisome complex and is recruited early to the Z-ring. Probably stimulates Z-ring formation, perhaps through the cross-linking of FtsZ protofilaments. Its function overlaps with FtsA. The chain is Cell division protein SepF from Bacillus cereus (strain G9842).